Consider the following 424-residue polypeptide: S-adenosylmethionine synthase (424 aa).

Histidine 16 provides a ligand contact to ATP. Aspartate 18 serves as a coordination point for Mg(2+). Glutamate 44 is a K(+) binding site. The L-methionine site is built by glutamate 57 and glutamine 100. Residues 100 to 110 (QSPDIAQGVNT) are flexible loop. ATP contacts are provided by residues 175 to 177 (DGK), 251 to 252 (KF), aspartate 260, 266 to 267 (RK), alanine 283, and lysine 287. Aspartate 260 serves as a coordination point for L-methionine. Lysine 291 serves as a coordination point for L-methionine.

The protein belongs to the AdoMet synthase family. In terms of assembly, homotetramer; dimer of dimers. It depends on Mg(2+) as a cofactor. K(+) serves as cofactor.

It localises to the cytoplasm. The enzyme catalyses L-methionine + ATP + H2O = S-adenosyl-L-methionine + phosphate + diphosphate. Its pathway is amino-acid biosynthesis; S-adenosyl-L-methionine biosynthesis; S-adenosyl-L-methionine from L-methionine: step 1/1. Its function is as follows. Catalyzes the formation of S-adenosylmethionine (AdoMet) from methionine and ATP. The overall synthetic reaction is composed of two sequential steps, AdoMet formation and the subsequent tripolyphosphate hydrolysis which occurs prior to release of AdoMet from the enzyme. This is S-adenosylmethionine synthase from Nostoc punctiforme (strain ATCC 29133 / PCC 73102).